A 435-amino-acid chain; its full sequence is tRNA modification GTPase MnmE (435 aa).

Positions 20, 77, and 117 each coordinate (6S)-5-formyl-5,6,7,8-tetrahydrofolate. The TrmE-type G domain occupies 214-359 (GIKVVIVGVP…FLKEIESFCL (146 aa)). GTP contacts are provided by residues 224-229 (NSGKSS), 243-249 (TEEEGTT), and 268-271 (DTAG). Mg(2+) is bound by residues S228 and T249. K435 contacts (6S)-5-formyl-5,6,7,8-tetrahydrofolate.

Belongs to the TRAFAC class TrmE-Era-EngA-EngB-Septin-like GTPase superfamily. TrmE GTPase family. Homodimer. Heterotetramer of two MnmE and two MnmG subunits. K(+) serves as cofactor.

It is found in the cytoplasm. Its function is as follows. Exhibits a very high intrinsic GTPase hydrolysis rate. Involved in the addition of a carboxymethylaminomethyl (cmnm) group at the wobble position (U34) of certain tRNAs, forming tRNA-cmnm(5)s(2)U34. The sequence is that of tRNA modification GTPase MnmE from Bartonella bacilliformis (strain ATCC 35685 / KC583 / Herrer 020/F12,63).